The chain runs to 185 residues: Ribosome-recycling factor (185 aa).

A disordered region spans residues 163 to 185 (LTNEATKKIDAISKDKEKEITEG). The segment covering 167–185 (ATKKIDAISKDKEKEITEG) has biased composition (basic and acidic residues).

Belongs to the RRF family.

It localises to the cytoplasm. In terms of biological role, responsible for the release of ribosomes from messenger RNA at the termination of protein biosynthesis. May increase the efficiency of translation by recycling ribosomes from one round of translation to another. This Latilactobacillus sakei subsp. sakei (strain 23K) (Lactobacillus sakei subsp. sakei) protein is Ribosome-recycling factor.